A 508-amino-acid polypeptide reads, in one-letter code: PTS system mannitol-specific EIICB component (508 aa).

Residues 1–30 (MSQTETQENKGLGRKVQAFGSFLSSMIMPN) are Cytoplasmic-facing. The 333-residue stretch at 19–351 (FGSFLSSMIM…LKFTKEPEED (333 aa)) folds into the PTS EIIC type-2 domain. The helical transmembrane segment at 31–52 (IGAFIAWGFIAAIFIDGGWWPN) threads the bilayer. Topologically, residues 53–56 (KDLS) are extracellular. Residues 57–77 (ELAGPMISYLIPLLIAYSGGR) traverse the membrane as a helical segment. Topologically, residues 78-141 (LIHEMRGGII…QGFEMLFNNF (64 aa)) are cytoplasmic. A helical membrane pass occupies residues 142 to 163 (SAGILGFIMTIVGFKILAPIME). Residues 164–172 (FIMHILSLA) lie on the Extracellular side of the membrane. Residues 173–193 (VEALVHAHLLPLVSIIVEPAK) traverse the membrane as a helical segment. Over 194-280 (IVFLNNAINH…VLMRPLLFIA (87 aa)) the chain is Cytoplasmic. A helical transmembrane segment spans residues 281-300 (VILGGMTGVATYSLLDFGFK). At 301–320 (SPASPGSFIVYMLNAPKGEF) the chain is on the extracellular side. A helical transmembrane segment spans residues 321 to 342 (LHMVLGVLLAAIVSFIVAALIL). Residues 343–508 (KFTKEPEEDL…RYDELLENLK (166 aa)) lie on the Cytoplasmic side of the membrane. Residues 355-400 (ATEKMEASKGKKSSVSSKLKGNEDNNATSTTASTSTSENNEEQSEE) form a disordered region. Over residues 367-392 (SSVSSKLKGNEDNNATSTTASTSTSE) the composition is skewed to low complexity. Residues 420-508 (NHVIFACDAG…RYDELLENLK (89 aa)) form the PTS EIIB type-2 domain. Cysteine 426 serves as the catalytic Phosphocysteine intermediate; for EIIB activity. At cysteine 426 the chain carries Phosphocysteine; by EIIA.

In terms of assembly, homodimer.

The protein localises to the cell membrane. The catalysed reaction is D-mannitol(out) + N(pros)-phospho-L-histidyl-[protein] = D-mannitol 1-phosphate(in) + L-histidyl-[protein]. In terms of biological role, the phosphoenolpyruvate-dependent sugar phosphotransferase system (sugar PTS), a major carbohydrate active transport system, catalyzes the phosphorylation of incoming sugar substrates concomitantly with their translocation across the cell membrane. The enzyme II CmtAB PTS system is involved in D-mannitol transport. This chain is PTS system mannitol-specific EIICB component (mtlA), found in Staphylococcus saprophyticus subsp. saprophyticus (strain ATCC 15305 / DSM 20229 / NCIMB 8711 / NCTC 7292 / S-41).